Here is a 293-residue protein sequence, read N- to C-terminus: Glycine--tRNA ligase alpha subunit (293 aa).

It belongs to the class-II aminoacyl-tRNA synthetase family. In terms of assembly, tetramer of two alpha and two beta subunits.

It localises to the cytoplasm. The catalysed reaction is tRNA(Gly) + glycine + ATP = glycyl-tRNA(Gly) + AMP + diphosphate. This chain is Glycine--tRNA ligase alpha subunit, found in Aliarcobacter butzleri (strain RM4018) (Arcobacter butzleri).